A 124-amino-acid polypeptide reads, in one-letter code: UPF0102 protein Noc_0355 (124 aa).

Belongs to the UPF0102 family.

In Nitrosococcus oceani (strain ATCC 19707 / BCRC 17464 / JCM 30415 / NCIMB 11848 / C-107), this protein is UPF0102 protein Noc_0355.